A 351-amino-acid chain; its full sequence is tRNA uridine(34) hydroxylase (351 aa).

Residues 146 to 240 enclose the Rhodanese domain; that stretch reads DDPQALFVDM…YARRAREQGL (95 aa). Cys200 (cysteine persulfide intermediate) is an active-site residue.

This sequence belongs to the TrhO family.

The enzyme catalyses uridine(34) in tRNA + AH2 + O2 = 5-hydroxyuridine(34) in tRNA + A + H2O. Functionally, catalyzes oxygen-dependent 5-hydroxyuridine (ho5U) modification at position 34 in tRNAs. The sequence is that of tRNA uridine(34) hydroxylase from Sodalis glossinidius (strain morsitans).